The chain runs to 425 residues: Enolase (425 aa).

Q162 is a binding site for (2R)-2-phosphoglycerate. The active-site Proton donor is E204. D241, E282, and D309 together coordinate Mg(2+). (2R)-2-phosphoglycerate contacts are provided by K334, R363, S364, and K385. K334 serves as the catalytic Proton acceptor.

The protein belongs to the enolase family. The cofactor is Mg(2+).

The protein localises to the cytoplasm. It localises to the secreted. The protein resides in the cell surface. The catalysed reaction is (2R)-2-phosphoglycerate = phosphoenolpyruvate + H2O. Its pathway is carbohydrate degradation; glycolysis; pyruvate from D-glyceraldehyde 3-phosphate: step 4/5. Catalyzes the reversible conversion of 2-phosphoglycerate (2-PG) into phosphoenolpyruvate (PEP). It is essential for the degradation of carbohydrates via glycolysis. This Corynebacterium efficiens (strain DSM 44549 / YS-314 / AJ 12310 / JCM 11189 / NBRC 100395) protein is Enolase.